A 616-amino-acid chain; its full sequence is Dihydroxy-acid dehydratase (616 aa).

A Mg(2+)-binding site is contributed by D81. C122 is a binding site for [2Fe-2S] cluster. 2 residues coordinate Mg(2+): D123 and K124. N6-carboxylysine is present on K124. C195 provides a ligand contact to [2Fe-2S] cluster. A Mg(2+)-binding site is contributed by E491. The active-site Proton acceptor is S517.

This sequence belongs to the IlvD/Edd family. As to quaternary structure, homodimer. [2Fe-2S] cluster is required as a cofactor. The cofactor is Mg(2+).

The catalysed reaction is (2R)-2,3-dihydroxy-3-methylbutanoate = 3-methyl-2-oxobutanoate + H2O. The enzyme catalyses (2R,3R)-2,3-dihydroxy-3-methylpentanoate = (S)-3-methyl-2-oxopentanoate + H2O. Its pathway is amino-acid biosynthesis; L-isoleucine biosynthesis; L-isoleucine from 2-oxobutanoate: step 3/4. It functions in the pathway amino-acid biosynthesis; L-valine biosynthesis; L-valine from pyruvate: step 3/4. In terms of biological role, functions in the biosynthesis of branched-chain amino acids. Catalyzes the dehydration of (2R,3R)-2,3-dihydroxy-3-methylpentanoate (2,3-dihydroxy-3-methylvalerate) into 2-oxo-3-methylpentanoate (2-oxo-3-methylvalerate) and of (2R)-2,3-dihydroxy-3-methylbutanoate (2,3-dihydroxyisovalerate) into 2-oxo-3-methylbutanoate (2-oxoisovalerate), the penultimate precursor to L-isoleucine and L-valine, respectively. In Escherichia coli O7:K1 (strain IAI39 / ExPEC), this protein is Dihydroxy-acid dehydratase.